A 293-amino-acid chain; its full sequence is Pantothenate synthetase (293 aa).

30-37 is a binding site for ATP; the sequence is MGYLHKGH. The active-site Proton donor is His-37. Gln-61 is a binding site for (R)-pantoate. Gln-61 lines the beta-alanine pocket. An ATP-binding site is contributed by 147-150; sequence GEKD. (R)-pantoate is bound at residue Gln-153. Residues Val-176 and 184 to 187 each bind ATP; that span reads CSSR.

It belongs to the pantothenate synthetase family. In terms of assembly, homodimer.

It localises to the cytoplasm. It carries out the reaction (R)-pantoate + beta-alanine + ATP = (R)-pantothenate + AMP + diphosphate + H(+). It functions in the pathway cofactor biosynthesis; (R)-pantothenate biosynthesis; (R)-pantothenate from (R)-pantoate and beta-alanine: step 1/1. Functionally, catalyzes the condensation of pantoate with beta-alanine in an ATP-dependent reaction via a pantoyl-adenylate intermediate. This is Pantothenate synthetase from Brucella abortus (strain S19).